A 358-amino-acid polypeptide reads, in one-letter code: Replication-associated protein (358 aa).

A CRESS-DNA virus Rep endonuclease domain is found at 7–115 (RVQAKNVFLT…DGDTVEWGQF (109 aa)). Residues 14 to 17 (FLTY) carry the RCR-1 motif. A divalent metal cation is bound by residues Glu-48, His-56, and His-58. The RCR-2 signature appears at 56-58 (HLH). Tyr-102 acts as the For DNA cleavage activity in catalysis. The RCR-3 signature appears at 102–105 (YLDK). A divalent metal cation is bound at residue Asp-106. The interval 142 to 152 (KSEALNVIREL) is binding to RBR1. Residues 155–175 (KDFVLQFHNLNSNLDRIFQEP) form an oligomerization region. ATP is bound at residue 220 to 227 (GDSRTGKT).

The protein belongs to the geminiviridae Rep protein family. Homooligomer. Interacts with the replication enhancer protein (REn). Interacts with host retinoblastoma-related protein 1 (RBR1), and may thereby induce the transcription of host replicative enzymes even if the cell is not dividing anymore. Interacts with host PCNA. Interacts with host SCE1 protein. Mg(2+) serves as cofactor. Requires Mn(2+) as cofactor.

Its subcellular location is the host nucleus. Essential for the replication of viral ssDNA. The closed circular ssDNA genome is first converted to a superhelical dsDNA. Rep binds a specific region at the genome origin of replication. It introduces an endonucleolytic nick within the conserved sequence 5'-TAATATTAC-3' in the intergenic region of the genome present in all geminiviruses, thereby initiating the rolling circle replication (RCR). Following cleavage, binds covalently to the 5'-phosphate of DNA as a tyrosyl ester. The cleavage gives rise to a free 3'-OH that serves as a primer for the cellular DNA polymerase. The polymerase synthesizes the (+) strand DNA by rolling circle mechanism. After one round of replication, a Rep-catalyzed nucleotidyl transfer reaction releases a circular single-stranded virus genome, thereby terminating the replication. Displays origin-specific DNA cleavage, nucleotidyl transferase, ATPase and helicase activities. In Hewittia sublobata (Coralbush), this protein is Replication-associated protein.